Here is a 214-residue protein sequence, read N- to C-terminus: Large ribosomal subunit protein uL4 (214 aa).

The segment at 56–86 (THKVKNRAEVSGTGKKPWKQKSTGKARAGSK) is disordered. Positions 71–85 (KPWKQKSTGKARAGS) are enriched in basic residues.

Belongs to the universal ribosomal protein uL4 family. In terms of assembly, part of the 50S ribosomal subunit.

Its function is as follows. One of the primary rRNA binding proteins, this protein initially binds near the 5'-end of the 23S rRNA. It is important during the early stages of 50S assembly. It makes multiple contacts with different domains of the 23S rRNA in the assembled 50S subunit and ribosome. Functionally, forms part of the polypeptide exit tunnel. This is Large ribosomal subunit protein uL4 from Mesomycoplasma hyopneumoniae (strain 232) (Mycoplasma hyopneumoniae).